A 290-amino-acid chain; its full sequence is Inner membrane protein YebZ (290 aa).

Over 1-10 (MLAFTWIALR) the chain is Periplasmic. The helical transmembrane segment at 11–31 (FIHFTSLMLVFGFAMYGAWLA) threads the bilayer. Topologically, residues 32-49 (PLTIRRLLAKRFLRLQQH) are cytoplasmic. Residues 50–70 (AAVWSLISATAMLAVQGGLMG) traverse the membrane as a helical segment. Over 71–89 (TGWTDVFSPNIWQAVLQTQ) the chain is Periplasmic. Residues 90 to 110 (FGGIWLWQIVLALVTLIVALM) form a helical membrane-spanning segment. Over 111-117 (QPRNMPR) the chain is Cytoplasmic. The helical transmembrane segment at 118-138 (LLFMLTTAQFILLAGVGHATL) threads the bilayer. The Periplasmic segment spans residues 139–151 (NEGVTAKIHQTNH). The helical transmembrane segment at 152–172 (AIHLICAAAWFGGLLPVLWCM) threads the bilayer. Residues 173–195 (QLIKGRWRHQAIQALMRFSWCGH) lie on the Cytoplasmic side of the membrane. The chain crosses the membrane as a helical span at residues 196–216 (FAVIGVLASGVLNALLITGFP). The Periplasmic segment spans residues 217–222 (PTLTTY). Residues 223–243 (WGQLLLLKAILVMIMVVIALA) traverse the membrane as a helical segment. The Cytoplasmic segment spans residues 244–260 (NRYVLVPRMRQDEDRAA). A helical membrane pass occupies residues 261-281 (PWFVWMTKLEWAIGAVVLVII). The Periplasmic segment spans residues 282–290 (SLLATLEPF).

Belongs to the CopD family.

Its subcellular location is the cell inner membrane. This is Inner membrane protein YebZ (yebZ) from Escherichia coli (strain K12).